We begin with the raw amino-acid sequence, 273 residues long: ATP synthase subunit delta (273 aa).

Residues 55–78 (TDPAQSARPRPSSPSVSSAPRSAA) form a disordered region. A compositionally biased stretch (low complexity) spans 57–78 (PAQSARPRPSSPSVSSAPRSAA).

It belongs to the ATPase delta chain family. In terms of assembly, F-type ATPases have 2 components, F(1) - the catalytic core - and F(0) - the membrane proton channel. F(1) has five subunits: alpha(3), beta(3), gamma(1), delta(1), epsilon(1). F(0) has three main subunits: a(1), b(2) and c(10-14). The alpha and beta chains form an alternating ring which encloses part of the gamma chain. F(1) is attached to F(0) by a central stalk formed by the gamma and epsilon chains, while a peripheral stalk is formed by the delta and b chains.

It is found in the cell membrane. In terms of biological role, f(1)F(0) ATP synthase produces ATP from ADP in the presence of a proton or sodium gradient. F-type ATPases consist of two structural domains, F(1) containing the extramembraneous catalytic core and F(0) containing the membrane proton channel, linked together by a central stalk and a peripheral stalk. During catalysis, ATP synthesis in the catalytic domain of F(1) is coupled via a rotary mechanism of the central stalk subunits to proton translocation. This protein is part of the stalk that links CF(0) to CF(1). It either transmits conformational changes from CF(0) to CF(1) or is implicated in proton conduction. This is ATP synthase subunit delta from Streptomyces lividans.